Reading from the N-terminus, the 789-residue chain is Probable phosphoketolase 1 (789 aa).

This sequence belongs to the XFP family. Thiamine diphosphate serves as cofactor.

The polypeptide is Probable phosphoketolase 1 (Rhizobium meliloti (strain 1021) (Ensifer meliloti)).